The sequence spans 506 residues: Galactose/methyl galactoside import ATP-binding protein MglA (506 aa).

ABC transporter domains follow at residues 14–249 (LEMS…VGRS) and 264–506 (VILE…SLHL). 46–53 (GENGAGKS) contributes to the ATP binding site.

It belongs to the ABC transporter superfamily. Galactose/methyl galactoside importer (TC 3.A.1.2.3) family. The complex is composed of one ATP-binding protein (MglA), two transmembrane proteins (MglC) and a solute-binding protein (MglB).

Its subcellular location is the cell inner membrane. It carries out the reaction D-galactose(out) + ATP + H2O = D-galactose(in) + ADP + phosphate + H(+). It catalyses the reaction methyl beta-D-galactoside(out) + ATP + H2O = methyl beta-D-galactoside(in) + ADP + phosphate + H(+). Its function is as follows. Part of the ABC transporter complex MglABC involved in galactose/methyl galactoside import. Responsible for energy coupling to the transport system. The protein is Galactose/methyl galactoside import ATP-binding protein MglA of Escherichia coli O6:K15:H31 (strain 536 / UPEC).